The chain runs to 60 residues: Temporin-CG2 (60 aa).

Positions 1-22 (MFTLKKPLLVLFFLATINLSLC) are cleaved as a signal peptide. Positions 23–43 (EQERNAEEERRDDDERNVEVE) are cleaved as a propeptide — removed in mature form.

In terms of tissue distribution, expressed by the skin glands.

It localises to the secreted. Its function is as follows. Antimicrobial peptide active against a variety of Gram-positive bacterial strains but not against Gram-negative bacteria. Has weak antifungal activity against a slime mold isolate. Has weak hemolytic activity against human erythrocytes. This Amolops chunganensis (Chungan torrent frog) protein is Temporin-CG2.